Here is a 577-residue protein sequence, read N- to C-terminus: E3 ubiquitin-protein ligase MSL2 (577 aa).

Residues 1 to 116 are sufficient for interaction with MSL1; sequence MNPVNATALY…CEYITQTTLA (116 aa). Zn(2+)-binding residues include Cys44, Cys47, Cys62, His64, Cys67, Cys70, Cys81, and Cys84. Residues 44–85 form an RING-type zinc finger; it reads CCVCGHLLQDPIAPTNSTCQHYVCKTCKGKKMMMKPSCSWCK. Residue Lys375 forms a Glycyl lysine isopeptide (Lys-Gly) (interchain with G-Cter in SUMO2) linkage. The tract at residues 405 to 428 is disordered; that stretch reads TKSMKKSHEHGSKKSHSKSKPGIL. Basic residues predominate over residues 407–423; sequence SMKKSHEHGSKKSHSKS. Position 447 is a phosphoserine (Ser447). Positions 457–508 constitute a CXC MSL2-type domain; it reads QEKKGCKCGRATQNPSVLTCRGQRCPCYSNRKACLDCICRGCQNSYMANGEK. The Zn(2+) site is built by Cys462, Cys464, Cys476, Cys481, Cys483, Cys490, Cys493, Cys495, and Cys498.

It belongs to the MSL2 family. Component of a multisubunit histone acetyltransferase complex (MSL) at least composed of the KAT8/MOF/MYST1, MSL1/hampin, MSL2 and MSL3. Forms a MSL heterotetrameric core with MSL1.

The protein resides in the nucleus. It localises to the chromosome. It carries out the reaction S-ubiquitinyl-[E2 ubiquitin-conjugating enzyme]-L-cysteine + [acceptor protein]-L-lysine = [E2 ubiquitin-conjugating enzyme]-L-cysteine + N(6)-ubiquitinyl-[acceptor protein]-L-lysine.. It participates in protein modification; protein ubiquitination. Functionally, non-catalytic component of the MSL histone acetyltransferase complex, a multiprotein complex that mediates the majority of histone H4 acetylation at 'Lys-16' (H4K16ac), an epigenetic mark that prevents chromatin compaction. The MSL complex is required for chromosome stability and genome integrity by maintaining homeostatic levels of H4K16ac. The MSL complex is also involved in gene dosage by promoting up-regulation of genes expressed by the X chromosome. X up-regulation is required to compensate for autosomal biallelic expression. The MSL complex also participates in gene dosage compensation by promoting expression of Tsix non-coding RNA. MSL2 plays a key role in gene dosage by ensuring biallelic expression of a subset of dosage-sensitive genes, including many haploinsufficient genes. Acts by promoting promoter-enhancer contacts, thereby preventing DNA methylation of one allele and creating a methylation-free environment for methylation-sensitive transcription factors such as SP1, KANSL1 and KANSL3. Also acts as an E3 ubiquitin ligase that promotes monoubiquitination of histone H2B at 'Lys-35' (H2BK34Ub), but not that of H2A. This activity is greatly enhanced by heterodimerization with MSL1. H2B ubiquitination in turn stimulates histone H3 methylation at 'Lys-4' (H3K4me) and 'Lys-79' (H3K79me) and leads to gene activation, including that of HOXA9 and MEIS1. The polypeptide is E3 ubiquitin-protein ligase MSL2 (Mus musculus (Mouse)).